The primary structure comprises 510 residues: 11S globulin (510 aa).

Residues 1-23 form the signal peptide; sequence MAKPILLSISLCLVALVNGCLAQ. 2 disulfides stabilise this stretch: Cys-35–Cys-68 and Cys-111–Cys-325. The Cupin type-1 1 domain maps to 38 to 257; it reads KRLVALEPSN…AFNVDTETAR (220 aa). Disordered regions lie at residues 194–239 and 284–319; these read AGNP…VFSG and WSRE…DDNG. Basic and acidic residues predominate over residues 284 to 318; the sequence is WSREEQEREERKERERERESESERRQSRRGGRDDN. The NGXEET; peptidase recognition motif motif lies at 318–323; it reads NGLEET. The region spanning 331-480 is the Cupin type-1 2 domain; sequence ENIGDPSRAD…ALQIPREDAR (150 aa). A disordered region spans residues 487–510; the sequence is QESTLVRSRPSSSRSSRSERRAEV.

The protein belongs to the 11S seed storage protein (globulins) family. As to quaternary structure, homohexamer. Can assemble in other multimeric configurations. In terms of processing, proteolytically processed from a single precursor to produce an acidic and a basic chain that are linked by a disulfide bond. Expressed in endosperm of the seed.

Seed storage protein. The sequence is that of 11S globulin from Juglans nigra (Black walnut).